Consider the following 520-residue polypeptide: MGYVSGILLVLIGLLAGVGLGVLLRQYWLEKRNRQLQEQARNILTDARKEAETIKKEAILQAKDSLFQMKAEFERETKESRKEFQNLEKRILQKEENLDKKSEALDKREGVIGKREKVLQQQEKELEENTRELHMLIEEQRKKLESLSGISAQQAKEMLARAIENEARHDAALMVKKIETEARETADRKAKNIISLAIQRYAGDYVAEKTVSVVNLPNEEMKGRIIGREGRNIRAIEASTGVDLIIDDTPEAVILSGFNPVRREVARVSLERLISDGRIHPARIEEIVEKVNIEIENAIKESGEQAAFDVGVHGIHPELIKLLGKLKYRTSYAQNVLQHSREVAFLCGIMAAELGINEKQAKRAGLLHDIGKAIDHEMEGPHATLGADLTRRYGEAPPIIHAIAAHHEDVPAEDVLAILVQAADALSGARPGARKELLETYVKRLEDLERIAGSFPGINKAYAIQAGRELRIIVESGQVNDADVVLLSRDIAKKIEGELTYPGQIKVTVIRETRAVEYAK.

A helical membrane pass occupies residues 4 to 24; sequence VSGILLVLIGLLAGVGLGVLL. In terms of domain architecture, KH spans 210-270; sequence TVSVVNLPNE…VRREVARVSL (61 aa). In terms of domain architecture, HD spans 336-429; that stretch reads VLQHSREVAF…VQAADALSGA (94 aa).

Belongs to the RNase Y family.

The protein localises to the cell membrane. Its function is as follows. Endoribonuclease that initiates mRNA decay. The protein is Ribonuclease Y of Syntrophobacter fumaroxidans (strain DSM 10017 / MPOB).